An 85-amino-acid polypeptide reads, in one-letter code: MERKRYSKRYCKYTEAKISFIDYKDLDMLKHTLSERYKIMPRRLTGNSKKWQERVEVAIKRARHMALIPYIVDRKRVVDSPFKQH.

Belongs to the bacterial ribosomal protein bS18 family. In terms of assembly, part of the 30S ribosomal subunit. Forms a tight heterodimer with protein bS6.

In terms of biological role, binds as a heterodimer with protein bS6 to the central domain of the 16S rRNA, where it helps stabilize the platform of the 30S subunit. The protein is Small ribosomal subunit protein bS18 of Helicobacter pylori (strain Shi470).